Reading from the N-terminus, the 326-residue chain is ELAV-like protein 1 (326 aa).

At serine 2 the chain carries N-acetylserine. Residue serine 2 is modified to Phosphoserine. An RRM 1 domain is found at 20-98 (TNLIVNYLPQ…KTIKVSYARP (79 aa)). Phosphoserine occurs at positions 100 and 158. The RRM 2 domain occupies 106–186 (ANLYISGLPR…EPITVKFAAN (81 aa)). Lysine 191 participates in a covalent cross-link: Glycyl lysine isopeptide (Lys-Gly) (interchain with G-Cter in SUMO2). 2 positions are modified to phosphoserine: serine 197 and serine 202. Arginine 206 is modified (omega-N-methylarginine). Arginine 217 bears the Asymmetric dimethylarginine; by CARM1; alternate mark. Arginine 217 carries the post-translational modification Omega-N-methylarginine; alternate. Serine 221 and serine 318 each carry phosphoserine. Residues 244-322 (WCIFIYNLGQ…KILQVSFKTN (79 aa)) enclose the RRM 3 domain.

Belongs to the RRM elav family. As to quaternary structure, monomer and homodimer (in vitro). Interacts with ANP32A. Interacts with ZNF385A; the interaction is indirect and mRNA-dependent and may regulate p53/TP53 expression. Identified in a mRNP complex, at least composed of DHX9, DDX3X, ELAVL1, HNRNPU, IGF2BP1, ILF3, PABPC1, PCBP2, PTBP2, STAU1, STAU2, SYNCRIP and YBX1. Interacts with AGO1 and AGO2. Interacts with IGF2BP1. Interacts with IGF2BP2 and IGF2BP3. Interacts with HNRNPL. Interacts with DHX36; this interaction occurs in a RNA-dependent manner. Interacts with ILF3; this interaction occurs in a RNA-dependent manner. Interacts with PLEKHN1. Interacts with SHFL; the interaction increases in presence of RNA. Interacts with YBX1; interaction recruits ELAVL1 on C5-methylcytosine (m5C)-containing mRNAs, thereby promoting mRNA stability. Interacts with FXR1. In terms of processing, phosphorylated by MAPKAPK2. Phosphorylated by PRKCD. Post-translationally, methylated at Arg-217 by CARM1 in T-cells in response to LPS challenge.

Its subcellular location is the cytoplasm. It is found in the nucleus. The protein resides in the stress granule. It localises to the P-body. Its function is as follows. RNA-binding protein that binds to the 3'-UTR region of mRNAs and increases their stability. Involved in embryonic stem cell (ESC) differentiation: preferentially binds mRNAs that are not methylated by N6-methyladenosine (m6A), stabilizing them, promoting ESC differentiation. Has also been shown to be capable of binding to m6A-containing mRNAs and contributes to MYC stability by binding to m6A-containing MYC mRNAs. Binds to poly-U elements and AU-rich elements (AREs) in the 3'-UTR of target mRNAs. Binds avidly to the AU-rich element in FOS and IL3/interleukin-3 mRNAs. In the case of the FOS AU-rich element, binds to a core element of 27 nucleotides that contain AUUUA, AUUUUA, and AUUUUUA motifs. Binds preferentially to the 5'-UUUU[AG]UUU-3' motif in vitro. With ZNF385A, binds the 3'-UTR of p53/TP53 mRNA to control their nuclear export induced by CDKN2A. Hence, may regulate p53/TP53 expression and mediate in part the CDKN2A anti-proliferative activity. May also bind with ZNF385A the CCNB1 mRNA. Increases the stability of the leptin mRNA harboring an AU-rich element (ARE) in its 3' UTR. In Mus musculus (Mouse), this protein is ELAV-like protein 1 (Elavl1).